Consider the following 530-residue polypeptide: Arginine--tRNA ligase (530 aa).

The short motif at 113-123 (ANPTGPLHIGH) is the 'HIGH' region element.

Belongs to the class-I aminoacyl-tRNA synthetase family. As to quaternary structure, monomer.

The protein localises to the cytoplasm. The enzyme catalyses tRNA(Arg) + L-arginine + ATP = L-arginyl-tRNA(Arg) + AMP + diphosphate. This Campylobacter jejuni (strain RM1221) protein is Arginine--tRNA ligase.